The primary structure comprises 249 residues: Aliphatic sulfonates import ATP-binding protein SsuB 2 (249 aa).

Positions 5-233 (LDLLEIRKAY…PRDRRAVELA (229 aa)) constitute an ABC transporter domain. 37–44 (GPSGCGKS) lines the ATP pocket.

This sequence belongs to the ABC transporter superfamily. Aliphatic sulfonates importer (TC 3.A.1.17.2) family. As to quaternary structure, the complex is composed of two ATP-binding proteins (SsuB), two transmembrane proteins (SsuC) and a solute-binding protein (SsuA).

The protein localises to the cell inner membrane. It catalyses the reaction ATP + H2O + aliphatic sulfonate-[sulfonate-binding protein]Side 1 = ADP + phosphate + aliphatic sulfonateSide 2 + [sulfonate-binding protein]Side 1.. In terms of biological role, part of the ABC transporter complex SsuABC involved in aliphatic sulfonates import. Responsible for energy coupling to the transport system. The sequence is that of Aliphatic sulfonates import ATP-binding protein SsuB 2 from Pseudomonas aeruginosa (strain ATCC 15692 / DSM 22644 / CIP 104116 / JCM 14847 / LMG 12228 / 1C / PRS 101 / PAO1).